The primary structure comprises 190 residues: GTP cyclohydrolase 1 (190 aa).

Zn(2+)-binding residues include cysteine 75, histidine 78, and cysteine 146.

The protein belongs to the GTP cyclohydrolase I family. Homomer.

The enzyme catalyses GTP + H2O = 7,8-dihydroneopterin 3'-triphosphate + formate + H(+). The protein operates within cofactor biosynthesis; 7,8-dihydroneopterin triphosphate biosynthesis; 7,8-dihydroneopterin triphosphate from GTP: step 1/1. This Campylobacter concisus (strain 13826) protein is GTP cyclohydrolase 1.